The following is a 140-amino-acid chain: Regulator of ribonuclease activity B (140 aa).

The interval 115–140 is disordered; it reads FEDPNAQDDDEDDGEAIDEDDNGIRH. A compositionally biased stretch (acidic residues) spans 119-140; sequence NAQDDDEDDGEAIDEDDNGIRH.

The protein belongs to the RraB family. Interacts with the C-terminal region of Rne.

Its subcellular location is the cytoplasm. Its function is as follows. Globally modulates RNA abundance by binding to RNase E (Rne) and regulating its endonucleolytic activity. Can modulate Rne action in a substrate-dependent manner by altering the composition of the degradosome. The protein is Regulator of ribonuclease activity B of Pantoea ananatis (strain LMG 20103).